Here is a 215-residue protein sequence, read N- to C-terminus: Oligoribonuclease (215 aa).

Positions 5-170 (LVWIDCEMTG…ADIHESIREL (166 aa)) constitute an Exonuclease domain. Tyr127 is an active-site residue. Residues 196–215 (LSDGAGAQEETDSAEAPQSG) are disordered.

The protein belongs to the oligoribonuclease family.

The protein localises to the cytoplasm. Functionally, 3'-to-5' exoribonuclease specific for small oligoribonucleotides. This is Oligoribonuclease from Mycobacterium bovis (strain BCG / Pasteur 1173P2).